The following is a 201-amino-acid chain: Fas apoptotic inhibitory molecule 1 (201 aa).

It belongs to the FAIM1 family.

The protein resides in the cytoplasm. Its function is as follows. Plays a role as an inducible effector molecule that mediates Fas resistance produced by surface Ig engagement in B cells. The sequence is that of Fas apoptotic inhibitory molecule 1 (FAIM) from Bos taurus (Bovine).